A 326-amino-acid polypeptide reads, in one-letter code: Phenylalanine--tRNA ligase alpha subunit (326 aa).

Glutamate 251 contributes to the Mg(2+) binding site.

Belongs to the class-II aminoacyl-tRNA synthetase family. Phe-tRNA synthetase alpha subunit type 1 subfamily. Tetramer of two alpha and two beta subunits. Mg(2+) serves as cofactor.

It is found in the cytoplasm. The catalysed reaction is tRNA(Phe) + L-phenylalanine + ATP = L-phenylalanyl-tRNA(Phe) + AMP + diphosphate + H(+). The sequence is that of Phenylalanine--tRNA ligase alpha subunit from Idiomarina loihiensis (strain ATCC BAA-735 / DSM 15497 / L2-TR).